Reading from the N-terminus, the 2694-residue chain is Teneurin-3 (2694 aa).

Disordered regions lie at residues 1 to 45 (MDVK…SSSE), 106 to 132 (PSSL…DNQS), and 161 to 198 (TQPA…PSVT). The Teneurin N-terminal domain occupies 1-306 (MDVKERRPYC…KSSKYCSWRC (306 aa)). Residues 1–312 (MDVKERRPYC…SWRCTALSAM (312 aa)) lie on the Cytoplasmic side of the membrane. Positions 163 to 184 (PAPSHSCNEQPSNQHQQGQSTL) are enriched in polar residues. The chain crosses the membrane as a helical span at residues 313 to 333 (AVSILLSVLLCYCIAMHLFGL). The Extracellular segment spans residues 334–2694 (NWQLQETEGY…FLRQSEIGKR (2361 aa)). N-linked (GlcNAc...) asparagine glycans are attached at residues asparagine 374 and asparagine 413. 8 consecutive EGF-like domains span residues 508–539 (TLTE…PDCS), 540–570 (RAAC…TECD), 572–604 (PSNQ…DNCE), 605–636 (EVDC…NNCE), 638–671 (LKTM…PDCS), 672–703 (IEVC…VCDL), 704–733 (KACH…EHCT), and 734–768 (VEGC…AGCD). 22 disulfide bridges follow: cysteine 512-cysteine 522, cysteine 516-cysteine 527, cysteine 529-cysteine 538, cysteine 547-cysteine 558, cysteine 560-cysteine 569, cysteine 576-cysteine 587, cysteine 581-cysteine 592, cysteine 594-cysteine 603, cysteine 608-cysteine 619, cysteine 613-cysteine 624, cysteine 626-cysteine 635, cysteine 646-cysteine 659, cysteine 661-cysteine 670, cysteine 675-cysteine 685, cysteine 679-cysteine 690, cysteine 692-cysteine 701, cysteine 706-cysteine 716, cysteine 710-cysteine 721, cysteine 723-cysteine 732, cysteine 737-cysteine 747, cysteine 741-cysteine 756, and cysteine 758-cysteine 767. Asparagine 664 is a glycosylation site (N-linked (GlcNAc...) asparagine). N-linked (GlcNAc...) asparagine glycans are attached at residues asparagine 854, asparagine 877, and asparagine 1048. NHL repeat units lie at residues 1166 to 1192 (LLAP…RRIF), 1194 to 1238 (SGNV…PKAL), 1264 to 1308 (ARCG…NGII), 1325 to 1365 (CDNS…ITEN), and 1452 to 1495 (CYQT…IRHN). The N-linked (GlcNAc...) asparagine glycan is linked to asparagine 1196. The YD 1 repeat unit spans residues 1505–1524 (FEVASPASQELYVFDSNGTH). N-linked (GlcNAc...) asparagine glycans are attached at residues asparagine 1521 and asparagine 1538. YD repeat units follow at residues 1541–1561 (YSNE…LRVR), 1604–1623 (YHGN…WTTF), and 1624–1646 (YDYD…TSLI). 4 N-linked (GlcNAc...) asparagine glycosylation sites follow: asparagine 1634, asparagine 1671, asparagine 1729, and asparagine 1814. YD repeat units follow at residues 1817 to 1836 (YSST…ERVE), 1858 to 1876 (YLDK…YIFD), 1877 to 1897 (YDLQ…HTMQ), 1904 to 1921 (YYRN…VTVD), 1922 to 1943 (YSED…VLYK), 1944 to 1961 (YRRQ…TRVS), 1964 to 1984 (YDET…FICS), 1987 to 2007 (YRQI…DGMV), 2015 to 2034 (YDNS…TPLP), 2040 to 2057 (FDDI…GVIY), 2058 to 2084 (YDIN…IKEI), 2086 to 2099 (YEIF…ITIQ), 2100 to 2123 (YDNM…TKYG), 2126 to 2146 (YDVD…WRYN), 2147 to 2167 (YDLN…LTPL), 2169 to 2189 (YDLR…DEDG), 2201 to 2221 (YNSK…TIQY), and 2223 to 2243 (YDGL…LQFF). The N-linked (GlcNAc...) asparagine glycan is linked to asparagine 1915. The N-linked (GlcNAc...) asparagine glycan is linked to asparagine 2118. Asparagine 2258 is a glycosylation site (N-linked (GlcNAc...) asparagine). A YD 23 repeat occupies 2269 to 2310 (YDLQGHLFAMEISSGEEFYIACDNTGTPLAVFSSNGLLLKQV). N-linked (GlcNAc...) asparagine glycosylation occurs at asparagine 2571.

The protein belongs to the tenascin family. Teneurin subfamily. In terms of assembly, homodimer; disulfide-linked; to mediate homophilic cell adhesion. Expressed by retinal ganglion cells and their presynaptic amacrine and postsynaptic tectal cell targets.

It is found in the cell membrane. The protein resides in the cell projection. The protein localises to the axon. Functionally, involved in neural development by regulating the establishment of proper connectivity within the nervous system. Acts in both pre- and postsynaptic neurons in the hippocampus to control the assembly of a precise topographic projection: required in both CA1 and subicular neurons for the precise targeting of proximal CA1 axons to distal subiculum, probably by promoting homophilic cell adhesion. Required by retinal ganglion cells for acquisition of their correct morphological and functional connectivity, thereby playing a key role in the development of the visual pathway. This Danio rerio (Zebrafish) protein is Teneurin-3 (tenm3).